The chain runs to 293 residues: Elongation factor Ts (293 aa).

Residues 80–83 form an involved in Mg(2+) ion dislocation from EF-Tu region; the sequence is TDFV.

The protein belongs to the EF-Ts family.

Its subcellular location is the cytoplasm. In terms of biological role, associates with the EF-Tu.GDP complex and induces the exchange of GDP to GTP. It remains bound to the aminoacyl-tRNA.EF-Tu.GTP complex up to the GTP hydrolysis stage on the ribosome. The sequence is that of Elongation factor Ts from Burkholderia multivorans (strain ATCC 17616 / 249).